We begin with the raw amino-acid sequence, 859 residues long: Protein EFR3 homolog (859 aa).

The segment covering 696–714 (RKNDGSGDQWQNDTPNFDS) has biased composition (polar residues). The tract at residues 696-728 (RKNDGSGDQWQNDTPNFDSTDGRESPSGYKTVG) is disordered.

It belongs to the EFR3 family.

In Caenorhabditis elegans, this protein is Protein EFR3 homolog.